A 317-amino-acid polypeptide reads, in one-letter code: MGTDNQTWVSEFILLGLSSDWDTRVSLFVLFLVMYVVTVLGNCLIVLLIRLDSRLHTPMYFFLTNLSLVDVSYATSVVPQLLAHFLAEHKAIPFQSCAAQLFFSLALGGIEFVLLAVMAYDRYVAVCDALRYSAIMHGGLCARLAITSWVSGFISSPVQTAITFQLPMCRNKFIDHISCELLAVVRLACVDTSSNEVTIMVSSIVLLMTPFCLVLLSYIQIISTILKIQSREGRKKAFHTCASHLTVVALCYGVAIFTYIQPHSSPSVLQEKLFSVFYAILTPMLNPMIYSLRNKEVKGAWQKLLWKFSGLTSKLAT.

The Extracellular segment spans residues 1 to 24 (MGTDNQTWVSEFILLGLSSDWDTR). The N-linked (GlcNAc...) asparagine glycan is linked to asparagine 5. A helical membrane pass occupies residues 25–48 (VSLFVLFLVMYVVTVLGNCLIVLL). Topologically, residues 49–57 (IRLDSRLHT) are cytoplasmic. Residues 58–79 (PMYFFLTNLSLVDVSYATSVVP) traverse the membrane as a helical segment. Over 80–100 (QLLAHFLAEHKAIPFQSCAAQ) the chain is Extracellular. An intrachain disulfide couples cysteine 97 to cysteine 189. The helical transmembrane segment at 101 to 120 (LFFSLALGGIEFVLLAVMAY) threads the bilayer. At 121–139 (DRYVAVCDALRYSAIMHGG) the chain is on the cytoplasmic side. Residues 140–160 (LCARLAITSWVSGFISSPVQT) traverse the membrane as a helical segment. Over 161–200 (AITFQLPMCRNKFIDHISCELLAVVRLACVDTSSNEVTIM) the chain is Extracellular. The chain crosses the membrane as a helical span at residues 201–222 (VSSIVLLMTPFCLVLLSYIQII). Residues 223–236 (STILKIQSREGRKK) are Cytoplasmic-facing. A helical membrane pass occupies residues 237–261 (AFHTCASHLTVVALCYGVAIFTYIQ). Over 262–272 (PHSSPSVLQEK) the chain is Extracellular. A helical membrane pass occupies residues 273 to 292 (LFSVFYAILTPMLNPMIYSL). The Cytoplasmic segment spans residues 293 to 317 (RNKEVKGAWQKLLWKFSGLTSKLAT).

Belongs to the G-protein coupled receptor 1 family.

The protein resides in the cell membrane. Its function is as follows. Odorant receptor. The chain is Olfactory receptor 2F1 (OR2F1) from Homo sapiens (Human).